A 149-amino-acid polypeptide reads, in one-letter code: Transcription factor bHLH153 (149 aa).

The region spanning 27-76 (RHKSDLSFSSKERKDKVGERISALQQIVSPYGKTDTASVLLDAMHYIEFL) is the bHLH domain.

The protein belongs to the bHLH protein family.

The protein localises to the nucleus. The polypeptide is Transcription factor bHLH153 (Arabidopsis thaliana (Mouse-ear cress)).